The primary structure comprises 286 residues: 4-hydroxybenzoate octaprenyltransferase (286 aa).

7 helical membrane passes run 21-40 (GTLL…AGGM), 95-115 (ILFV…NGLV), 142-162 (FLGV…TGEV), 167-187 (WWLF…YAMV), 211-231 (IIGL…WSAE), 235-255 (LYGL…MLIF), and 266-286 (FLNN…DYLI).

It belongs to the UbiA prenyltransferase family. Mg(2+) serves as cofactor.

It is found in the cell inner membrane. The catalysed reaction is all-trans-octaprenyl diphosphate + 4-hydroxybenzoate = 4-hydroxy-3-(all-trans-octaprenyl)benzoate + diphosphate. The protein operates within cofactor biosynthesis; ubiquinone biosynthesis. Catalyzes the prenylation of para-hydroxybenzoate (PHB) with an all-trans polyprenyl group. Mediates the second step in the final reaction sequence of ubiquinone-8 (UQ-8) biosynthesis, which is the condensation of the polyisoprenoid side chain with PHB, generating the first membrane-bound Q intermediate 3-octaprenyl-4-hydroxybenzoate. The protein is 4-hydroxybenzoate octaprenyltransferase of Shewanella putrefaciens (strain CN-32 / ATCC BAA-453).